Consider the following 41-residue polypeptide: Conotoxin Ac4.2 (41 aa).

A propeptide spanning residues 1 to 11 (FDGRNAAVNER) is cleaved from the precursor. The residue at position 13 (Pro-13) is a 4-hydroxyproline. 2 O-linked (HexNAc...) threonine glycosylation sites follow: Thr-18 and Thr-20. A 4-hydroxyproline mark is found at Pro-29 and Pro-33. A Cysteine amide modification is found at Cys-40.

This sequence belongs to the conotoxin A superfamily. Contains 3 disulfide bonds. As to expression, expressed by the venom duct.

Its subcellular location is the secreted. Its function is as follows. Probable neurotoxin with ion channel inhibitor activity. The chain is Conotoxin Ac4.2 from Conus achatinus (Little frog cone).